Consider the following 456-residue polypeptide: Bifunctional protein GlmU (456 aa).

The tract at residues 1-229 (MLNNAMSVVI…LSEVEGVNNR (229 aa)) is pyrophosphorylase. UDP-N-acetyl-alpha-D-glucosamine contacts are provided by residues 11–14 (LAAG), Lys-25, Gln-76, 81–82 (GT), 103–105 (YGD), Gly-140, Glu-154, Asn-169, and Asn-227. Asp-105 lines the Mg(2+) pocket. Asn-227 is a Mg(2+) binding site. A linker region spans residues 230–250 (LQLSRLERVYQSEQAEKLLLA). Positions 251-456 (GVMLRDPARF…EGWRRPVKKK (206 aa)) are N-acetyltransferase. Positions 333 and 351 each coordinate UDP-N-acetyl-alpha-D-glucosamine. The Proton acceptor role is filled by His-363. UDP-N-acetyl-alpha-D-glucosamine contacts are provided by Tyr-366 and Asn-377. Acetyl-CoA-binding positions include Ala-380, 386-387 (NY), Ser-405, Ala-423, and Arg-440.

It in the N-terminal section; belongs to the N-acetylglucosamine-1-phosphate uridyltransferase family. In the C-terminal section; belongs to the transferase hexapeptide repeat family. Homotrimer. Mg(2+) is required as a cofactor.

Its subcellular location is the cytoplasm. The catalysed reaction is alpha-D-glucosamine 1-phosphate + acetyl-CoA = N-acetyl-alpha-D-glucosamine 1-phosphate + CoA + H(+). It catalyses the reaction N-acetyl-alpha-D-glucosamine 1-phosphate + UTP + H(+) = UDP-N-acetyl-alpha-D-glucosamine + diphosphate. It participates in nucleotide-sugar biosynthesis; UDP-N-acetyl-alpha-D-glucosamine biosynthesis; N-acetyl-alpha-D-glucosamine 1-phosphate from alpha-D-glucosamine 6-phosphate (route II): step 2/2. Its pathway is nucleotide-sugar biosynthesis; UDP-N-acetyl-alpha-D-glucosamine biosynthesis; UDP-N-acetyl-alpha-D-glucosamine from N-acetyl-alpha-D-glucosamine 1-phosphate: step 1/1. It functions in the pathway bacterial outer membrane biogenesis; LPS lipid A biosynthesis. In terms of biological role, catalyzes the last two sequential reactions in the de novo biosynthetic pathway for UDP-N-acetylglucosamine (UDP-GlcNAc). The C-terminal domain catalyzes the transfer of acetyl group from acetyl coenzyme A to glucosamine-1-phosphate (GlcN-1-P) to produce N-acetylglucosamine-1-phosphate (GlcNAc-1-P), which is converted into UDP-GlcNAc by the transfer of uridine 5-monophosphate (from uridine 5-triphosphate), a reaction catalyzed by the N-terminal domain. The protein is Bifunctional protein GlmU of Escherichia coli O45:K1 (strain S88 / ExPEC).